Consider the following 95-residue polypeptide: Heteroscorpine-1 (95 aa).

The N-terminal stretch at 1 to 19 (MNSKLTALIFLGLVAIASC) is a signal peptide. A BetaSPN-type CS-alpha/beta domain is found at 55-95 (EFQCVANIDTMGNCETHCQKTSGEKGFCHGTKCKCGKPLSY). Intrachain disulfides connect cysteine 58–cysteine 82, cysteine 68–cysteine 87, and cysteine 72–cysteine 89.

Belongs to the long chain scorpion toxin family. Class 3 subfamily. Contains 3 disulfide bonds. In terms of tissue distribution, expressed by the venom gland.

The protein resides in the secreted. Functionally, has antibacterial activity against B.subtilis, K.pneumoniae and P.aeruginosa. The sequence is that of Heteroscorpine-1 from Heterometrus laoticus (Thai giant scorpion).